Consider the following 80-residue polypeptide: Protein Vpu (80 aa).

At 1–7 the chain is on the extracellular side; the sequence is MLSLQIL. The helical transmembrane segment at 8–28 threads the bilayer; sequence AIVALVVAAIIAIVVWSIVFI. The Cytoplasmic portion of the chain corresponds to 29 to 80; it reads EYRKILRQRKIDRLIDRIREREEDSGNESEGDQEELAALERGHLAPWDVDDL. The tract at residues 49-80 is disordered; sequence REEDSGNESEGDQEELAALERGHLAPWDVDDL. A phosphoserine; by host CK2 mark is found at Ser53 and Ser57. The segment covering 53-65 has biased composition (acidic residues); it reads SGNESEGDQEELA.

The protein belongs to the HIV-1 VPU protein family. Homopentamer. Interacts with host CD4 and BRTC; these interactions induce proteasomal degradation of CD4. Interacts with host BST2; this interaction leads to the degradation of host BST2. Interacts with host FBXW11. Interacts with host AP1M1; this interaction plays a role in the mistrafficking and subsequent degradation of host BST2. Interacts with host RANBP2; this interaction allows Vpu to down-regulate host BLM sumoylation. Post-translationally, phosphorylated by host CK2. This phosphorylation is necessary for interaction with human BTRC and degradation of CD4.

It localises to the host membrane. With respect to regulation, ion channel activity is inhibited by hexamethylene amiloride in vitro. Functionally, enhances virion budding by targeting host CD4 and Tetherin/BST2 to proteasome degradation. Degradation of CD4 prevents any unwanted premature interactions between viral Env and its host receptor CD4 in the endoplasmic reticulum. Degradation of antiretroviral protein Tetherin/BST2 is important for virion budding, as BST2 tethers new viral particles to the host cell membrane. Mechanistically, Vpu bridges either CD4 or BST2 to BTRC, a substrate recognition subunit of the Skp1/Cullin/F-box protein E3 ubiquitin ligase, induces their ubiquitination and subsequent proteasomal degradation. The alteration of the E3 ligase specificity by Vpu seems to promote the degradation of host IKBKB, leading to NF-kappa-B down-regulation and subsequent apoptosis. Acts as a viroporin that forms an oligomeric ion channel in membranes. Modulates the host DNA repair mechanisms to promote degradation of nuclear viral cDNA in cells that are already productively infected in order to suppress immune sensing and proviral hyper-integration (superinfection). Manipulates PML-NBs and modulates SUMOylation of host BLM protein thereby enhancing its DNA-end processing activity toward viral unintegrated linear DNA. Also inhibits RAD52-mediated homologous repair of viral cDNA, preventing the generation of dead-end circular forms of single copies of the long terminal repeat and permitting sustained nucleolytic attack. The chain is Protein Vpu from Human immunodeficiency virus type 1 group M subtype B (strain 89.6) (HIV-1).